Consider the following 1093-residue polypeptide: MPFDVLISNQKDNTNHQNITPISKSVLLAPHSNHPVIEIATYSETDVYECYIRGFETKIVMRRTKDDWINITQVFKIAQFSKTKRTKILEKESNDMQHEKVQGGYGRFQGTWIPLDSAKFLVNKYEIIDPVVNSILTFQFDPNNPPPKRSKNSILRKTSPGTKITSPSSYNKTPRKKNSSSSTSATTTAANKKGKKNASINQPNPSPLQNLVFQTPQQFQVNSSMNIMNNNDNHTTMNFNNDTRHNLINNISNNSNQSTIIQQQKSIHENSFNNNYSATQKPLQFFPIPTNLQNKNVALNNPNNNDSNSYSHNIDNVINSSNNNNNGNNNNLIIVPDGPMQSQQQQQHHHEYLTNNFNHSMMDSITNGNSKKRRKKLNQSNEQQFYNQQEKIQRHFKLMKQPLLWQSFQNPNDHHNEYCDSNGSNNNNNTVASNGSSIEVFSSNENDNSMNMSSRSMTPFSAGNTSSQNKLENKMTDQEYKQTILTILSSERSSDVDQALLATLYPAPKNFNINFEIDDQGHTPLHWATAMANIPLIKMLITLNANALQCNKLGFNCITKSIFYNNCYKENAFDEIISILKICLITPDVNGRLPFHYLIELSVNKSKNPMIIKSYMDSIILSLGQQDYNLLKICLNYQDNIGNTPLHLSALNLNFEVYNRLVYLGASTDILNLDNESPASIMNKFNTPAGGSNSRNNNTKADRKLARNLPQKNYYQQQQQQQQPQNNVKIPKIIKTQHPDKEDSTADVNIAKTDSEVNESQYLHSNQPNSTNMNTIMEDLSNINSFVTSSVIKDIKSTPSKILENSPILYRRRSQSISDEKEKAKDNENQVEKKKDPLNSVKTAMPSLESPSSLLPIQMSPLGKYSKPLSQQINKLNTKVSSLQRIMGEEIKNLDNEVVETESSISNNKKRLITIAHQIEDAFDSVSNKTPINSISDLQSRIKETSSKLNSEKQNFIQSLEKSQALKLATIVQDEESKVDMNTNSSSHPEKQEDEEPIPKSTSETSSPKNTKADAKFSNTVQESYDVNETLRLATELTILQFKRRMTTLKISEAKSKINSSVKLDKYRNLIGITIENIDSKLDDIEKDLRANA.

An HTH APSES-type domain is found at 37-147 (IEIATYSETD…FQFDPNNPPP (111 aa)). The segment at residues 71–92 (ITQVFKIAQFSKTKRTKILEKE) is a DNA-binding region (H-T-H motif). Residues 138 to 210 (FQFDPNNPPP…NQPNPSPLQN (73 aa)) are disordered. Residues 152–172 (NSILRKTSPGTKITSPSSYNK) show a composition bias toward polar residues. Residues 179 to 201 (SSSSTSATTTAANKKGKKNASIN) are compositionally biased toward low complexity. At S255 the chain carries Phosphoserine. Low complexity predominate over residues 448 to 457 (NSMNMSSRSM). Residues 448–468 (NSMNMSSRSMTPFSAGNTSSQ) form a disordered region. Over residues 458-468 (TPFSAGNTSSQ) the composition is skewed to polar residues. ANK repeat units follow at residues 520 to 549 (QGHT…NALQ) and 641 to 670 (IGNT…STDI). The residue at position 806 (S806) is a Phosphoserine. 2 disordered regions span residues 813–855 (RSQS…SSLL) and 973–1017 (QDEE…DAKF). The span at 818–837 (SDEKEKAKDNENQVEKKKDP) shows a compositional bias: basic and acidic residues. Residues 846 to 855 (PSLESPSSLL) are compositionally biased toward low complexity. A compositionally biased stretch (polar residues) spans 1000–1010 (KSTSETSSPKN).

In terms of assembly, component of the transcription complex SCB-binding factor (SBF) composed of SWI6 and SWI4. Interacts with MSA2.

Functionally, part of a complex involved in cell-cycle-dependent transcription. SWI4 and SWI6 are required for formation of the cell-cycle box factor-DNA complex. The repeated element in the upstream region of HO (5'-CACGAAAA-3') is called the cell cycle box (CCB). This Saccharomyces cerevisiae (strain ATCC 204508 / S288c) (Baker's yeast) protein is Regulatory protein SWI4 (SWI4).